We begin with the raw amino-acid sequence, 482 residues long: High affinity 3',5'-cyclic-AMP phosphodiesterase 7A (482 aa).

Ser-84 carries the post-translational modification Phosphoserine. Residues 136 to 458 (LDDDYNGQAK…ASWKGLQREQ (323 aa)) form the PDEase domain. The Proton donor role is filled by His-212. A divalent metal cation is bound by residues His-216, His-252, Asp-253, and Asp-362.

Belongs to the cyclic nucleotide phosphodiesterase family. PDE7 subfamily. As to quaternary structure, interacts with CBFA2T3. A divalent metal cation is required as a cofactor. Found at high levels in skeletal muscle and at low levels in a variety of tissues including brain and heart. It is expressed as well in two T-cell lines. As to expression, found abundantly in skeletal muscle and at low levels in heart.

The protein localises to the cytoplasm. It localises to the cytosol. The catalysed reaction is 3',5'-cyclic AMP + H2O = AMP + H(+). It participates in purine metabolism; 3',5'-cyclic AMP degradation; AMP from 3',5'-cyclic AMP: step 1/1. Insensitive to all selective PDE inhibitors. In terms of biological role, hydrolyzes the second messenger cAMP, which is a key regulator of many important physiological processes. May have a role in muscle signal transduction. This chain is High affinity 3',5'-cyclic-AMP phosphodiesterase 7A, found in Homo sapiens (Human).